The primary structure comprises 161 residues: Cysteine dioxygenase (161 aa).

3 residues coordinate Fe cation: H75, H77, and H125.

Belongs to the cysteine dioxygenase family. The cofactor is Fe cation.

The catalysed reaction is L-cysteine + O2 = 3-sulfino-L-alanine + H(+). This is Cysteine dioxygenase (cdoA) from Bacillus subtilis (strain 168).